The primary structure comprises 249 residues: 3-deoxy-D-manno-octulosonic acid kinase (249 aa).

D175 is a catalytic residue.

This sequence belongs to the protein kinase superfamily. KdkA/RfaP family.

It is found in the cell inner membrane. It catalyses the reaction an alpha-Kdo-(2-&gt;6)-lipid IVA + ATP = a 4-O-phospho-alpha-Kdo-(2-&gt;6)-lipid IVA + ADP + H(+). The protein operates within bacterial outer membrane biogenesis; LPS core biosynthesis. Its function is as follows. Catalyzes the ATP-dependent phosphorylation of the 3-deoxy-D-manno-octulosonic acid (Kdo) residue in Kdo-lipid IV(A) at the 4-OH position. This Xanthomonas oryzae pv. oryzae (strain PXO99A) protein is 3-deoxy-D-manno-octulosonic acid kinase.